Here is a 317-residue protein sequence, read N- to C-terminus: SVP1-like protein 2 (317 aa).

WD repeat units follow at residues 119-159 (AHST…KMAE) and 164-203 (VDHAIIFSLAISPSNNLLAVTSDKSTLHVFNLPHPRNAPY).

The protein belongs to the WD repeat PROPPIN family.

It localises to the vacuole membrane. The protein resides in the cytoplasmic vesicle membrane. Its function is as follows. Involved in mitochondrial or peroxisomal functions and amino acid signaling pathways. In Emericella nidulans (strain FGSC A4 / ATCC 38163 / CBS 112.46 / NRRL 194 / M139) (Aspergillus nidulans), this protein is SVP1-like protein 2 (hsv2).